Consider the following 433-residue polypeptide: Trigger factor (433 aa).

The region spanning 163–248 is the PPIase FKBP-type domain; it reads GDTVNIDFSG…VNEIKFKEVP (86 aa).

It belongs to the FKBP-type PPIase family. Tig subfamily.

It is found in the cytoplasm. The enzyme catalyses [protein]-peptidylproline (omega=180) = [protein]-peptidylproline (omega=0). In terms of biological role, involved in protein export. Acts as a chaperone by maintaining the newly synthesized protein in an open conformation. Functions as a peptidyl-prolyl cis-trans isomerase. This chain is Trigger factor, found in Staphylococcus aureus (strain bovine RF122 / ET3-1).